The following is a 378-amino-acid chain: Probable pectin lyase A (378 aa).

Residues 1 to 18 (MKYQGLLAIAGCIASASA) form the signal peptide. Cystine bridges form between Cys81/Cys100 and Cys90/Cys224. A glycan (N-linked (GlcNAc...) asparagine) is linked at Asn127. Arg254 is an active-site residue. A disulfide bond links Cys321 and Cys329.

Belongs to the polysaccharide lyase 1 family.

The protein localises to the secreted. It carries out the reaction Eliminative cleavage of (1-&gt;4)-alpha-D-galacturonan methyl ester to give oligosaccharides with 4-deoxy-6-O-methyl-alpha-D-galact-4-enuronosyl groups at their non-reducing ends.. Functionally, pectinolytic enzymes consist of four classes of enzymes: pectin lyase, polygalacturonase, pectin methylesterase and rhamnogalacturonase. Among pectinolytic enzymes, pectin lyase is the most important in depolymerization of pectin, since it cleaves internal glycosidic bonds of highly methylated pectins. The chain is Probable pectin lyase A (pelA) from Neosartorya fischeri (strain ATCC 1020 / DSM 3700 / CBS 544.65 / FGSC A1164 / JCM 1740 / NRRL 181 / WB 181) (Aspergillus fischerianus).